A 149-amino-acid polypeptide reads, in one-letter code: Nucleoside diphosphate kinase (149 aa).

6 residues coordinate ATP: Lys9, Phe57, Arg85, Thr91, Arg102, and Asn112. Catalysis depends on His115, which acts as the Pros-phosphohistidine intermediate.

It belongs to the NDK family. Homotetramer. Mg(2+) serves as cofactor.

The protein resides in the cytoplasm. It catalyses the reaction a 2'-deoxyribonucleoside 5'-diphosphate + ATP = a 2'-deoxyribonucleoside 5'-triphosphate + ADP. The catalysed reaction is a ribonucleoside 5'-diphosphate + ATP = a ribonucleoside 5'-triphosphate + ADP. Its function is as follows. Major role in the synthesis of nucleoside triphosphates other than ATP. The ATP gamma phosphate is transferred to the NDP beta phosphate via a ping-pong mechanism, using a phosphorylated active-site intermediate. This is Nucleoside diphosphate kinase from Staphylococcus haemolyticus (strain JCSC1435).